The following is a 408-amino-acid chain: Dual-specificity RNA methyltransferase RlmN (408 aa).

E120 (proton acceptor) is an active-site residue. Residues 126–375 (EEGRGTLCIS…IRTPRGRDIL (250 aa)) form the Radical SAM core domain. A disulfide bridge connects residues C133 and C378. [4Fe-4S] cluster is bound by residues C140, C144, and C147. S-adenosyl-L-methionine-binding positions include 204 to 205 (GE), S236, 258 to 260 (SLH), and N335. The active-site S-methylcysteine intermediate is the C378.

Belongs to the radical SAM superfamily. RlmN family. The cofactor is [4Fe-4S] cluster.

It localises to the cytoplasm. The enzyme catalyses adenosine(2503) in 23S rRNA + 2 reduced [2Fe-2S]-[ferredoxin] + 2 S-adenosyl-L-methionine = 2-methyladenosine(2503) in 23S rRNA + 5'-deoxyadenosine + L-methionine + 2 oxidized [2Fe-2S]-[ferredoxin] + S-adenosyl-L-homocysteine. It carries out the reaction adenosine(37) in tRNA + 2 reduced [2Fe-2S]-[ferredoxin] + 2 S-adenosyl-L-methionine = 2-methyladenosine(37) in tRNA + 5'-deoxyadenosine + L-methionine + 2 oxidized [2Fe-2S]-[ferredoxin] + S-adenosyl-L-homocysteine. In terms of biological role, specifically methylates position 2 of adenine 2503 in 23S rRNA and position 2 of adenine 37 in tRNAs. m2A2503 modification seems to play a crucial role in the proofreading step occurring at the peptidyl transferase center and thus would serve to optimize ribosomal fidelity. The protein is Dual-specificity RNA methyltransferase RlmN of Rhizobium johnstonii (strain DSM 114642 / LMG 32736 / 3841) (Rhizobium leguminosarum bv. viciae).